A 1463-amino-acid polypeptide reads, in one-letter code: DNA polymerase III PolC-type (1463 aa).

The Exonuclease domain maps to 425-581; it reads YVVFDVETTG…YDAEATGRLL (157 aa).

The protein belongs to the DNA polymerase type-C family. PolC subfamily.

Its subcellular location is the cytoplasm. It catalyses the reaction DNA(n) + a 2'-deoxyribonucleoside 5'-triphosphate = DNA(n+1) + diphosphate. Required for replicative DNA synthesis. This DNA polymerase also exhibits 3' to 5' exonuclease activity. The chain is DNA polymerase III PolC-type from Streptococcus pneumoniae serotype 4 (strain ATCC BAA-334 / TIGR4).